Reading from the N-terminus, the 2282-residue chain is Ectopic P granules protein 5 homolog (2282 aa).

Belongs to the EPG5 family.

Functionally, involved in autophagy. This chain is Ectopic P granules protein 5 homolog, found in Aedes aegypti (Yellowfever mosquito).